We begin with the raw amino-acid sequence, 81 residues long: Mipartoxin-1 (81 aa).

Residues 1–21 form the signal peptide; it reads MKTLLLTLVVVTIVCLDLGNS. 4 disulfides stabilise this stretch: C24–C42, C35–C61, C65–C73, and C74–C79.

This sequence belongs to the three-finger toxin family. Short-chain subfamily. Contains 4 disulfide bonds. Expressed by the venom gland.

It is found in the secreted. Its function is as follows. Snake venom neurotoxin that blocks neuromuscular transmission on both avian and mouse nerve-muscle preparations, presenting a postsynaptic action through the nicotinic acetylcholine receptor (nAChR). Reversibly inhibits twitches in mouse phrenic nerve diaphragm and irreversibly in chick biventer cervicis muscle. Has no cytotoxic activity towards C2C12 cells up to 180 ug/ml. In Micrurus mipartitus (Red-tailed coral snake), this protein is Mipartoxin-1.